The following is a 421-amino-acid chain: 2',3'-cyclic-nucleotide 3'-phosphodiesterase (421 aa).

Residues serine 6 and serine 9 each carry the phosphoserine modification. Tyrosine 110 carries the post-translational modification Phosphotyrosine. A Phosphoserine modification is found at serine 170. Histidine 251 (proton acceptor) is an active-site residue. Threonine 253 is a binding site for substrate. The Proton donor role is filled by histidine 330. Threonine 332 lines the substrate pocket. At serine 359 the chain carries Phosphoserine. The residue at position 418 (cysteine 418) is a Cysteine methyl ester. Cysteine 418 is lipidated: S-farnesyl cysteine. Residues 419–421 constitute a propeptide, removed in mature form; the sequence is TII.

Belongs to the 2H phosphoesterase superfamily. CNPase family. Exists as monomers and homodimers.

Its subcellular location is the membrane. It is found in the melanosome. The enzyme catalyses a nucleoside 2',3'-cyclic phosphate + H2O = a nucleoside 2'-phosphate + H(+). Functionally, catalyzes the formation of 2'-nucleotide products from 2',3'-cyclic substrates. May participate in RNA metabolism in the myelinating cell, CNP is the third most abundant protein in central nervous system myelin. The sequence is that of 2',3'-cyclic-nucleotide 3'-phosphodiesterase from Pongo abelii (Sumatran orangutan).